Consider the following 286-residue polypeptide: 2-oxoglutarate synthase subunit KorB (286 aa).

As to quaternary structure, heterotetramer of the KorA, KorB, KorC and KorD subunits.

It catalyses the reaction 2 oxidized [2Fe-2S]-[ferredoxin] + 2-oxoglutarate + CoA = succinyl-CoA + 2 reduced [2Fe-2S]-[ferredoxin] + CO2 + H(+). This is 2-oxoglutarate synthase subunit KorB (korB) from Methanothermobacter thermautotrophicus (strain ATCC 29096 / DSM 1053 / JCM 10044 / NBRC 100330 / Delta H) (Methanobacterium thermoautotrophicum).